Consider the following 155-residue polypeptide: Ribosomal RNA large subunit methyltransferase H (155 aa).

Glycine 103 lines the S-adenosyl-L-methionine pocket.

This sequence belongs to the RNA methyltransferase RlmH family. As to quaternary structure, homodimer.

The protein localises to the cytoplasm. The enzyme catalyses pseudouridine(1915) in 23S rRNA + S-adenosyl-L-methionine = N(3)-methylpseudouridine(1915) in 23S rRNA + S-adenosyl-L-homocysteine + H(+). Functionally, specifically methylates the pseudouridine at position 1915 (m3Psi1915) in 23S rRNA. The polypeptide is Ribosomal RNA large subunit methyltransferase H (Caulobacter vibrioides (strain ATCC 19089 / CIP 103742 / CB 15) (Caulobacter crescentus)).